We begin with the raw amino-acid sequence, 444 residues long: Adenine permease AdeQ (444 aa).

The Cytoplasmic segment spans residues 1 to 29 (MNNDNTDYVSNESGTLSRLFKLPQHGTTV). A helical transmembrane segment spans residues 30 to 53 (RTELIAGMTTFLTMVYIVFVNPQI). Over 54 to 63 (LGAAQMDPKV) the chain is Periplasmic. The chain crosses the membrane as a helical span at residues 64 to 82 (VFVTTCLIAGIGSIAMGIF). The Cytoplasmic segment spans residues 83-84 (AN). A discontinuously helical membrane pass occupies residues 85 to 101 (LPVALAPAMGLNAFFAF). Over 102 to 113 (VVVGAMGISWQT) the chain is Periplasmic. A helical membrane pass occupies residues 114-133 (GMGAIFWGAVGLFLLTLFRI). Residues 134-145 (RYWMISNIPLSL) lie on the Cytoplasmic side of the membrane. A helical membrane pass occupies residues 146–166 (RIGITSGIGLFIALMGLKNTG). Topologically, residues 167–182 (VIVANKDTLVMIGDLS) are periplasmic. Residues 183–200 (SHGVLLGILGFFIITVLS) form a helical membrane-spanning segment. The Cytoplasmic segment spans residues 201 to 204 (SRHF). Residues 205-223 (HAAVLVSIVVTSCCGLFFG) form a helical membrane-spanning segment. The Periplasmic segment spans residues 224–251 (DVHFSGVYSIPPDISGVIGEVDLSGALT). The helical transmembrane segment at 252-280 (LELAGIIFSFMLINLFDSSGTLIGVTDKA) threads the bilayer. Topologically, residues 281–293 (GLIDGNGKFPNMN) are cytoplasmic. The chain crosses the membrane as a helical span at residues 294–309 (KALYVDSVSSVAGAFI). Residues 310–311 (GT) lie on the Periplasmic side of the membrane. A discontinuously helical transmembrane segment spans residues 312–327 (SSVTAYIESTSGVAVG). Over 328–331 (GRTG) the chain is Cytoplasmic. Residues 332 to 346 (LTAVVVGVMFLLVMF) form a helical membrane-spanning segment. Residues 347–357 (FSPLVAIVPPY) lie on the Periplasmic side of the membrane. The chain crosses the membrane as a helical span at residues 358-377 (ATAGALIFVGVLMTSSLARV). The Cytoplasmic portion of the chain corresponds to 378–382 (NWDDF). The discontinuously helical intramembrane region spans 383–418 (TESVPAFITTVMMPFTFSITEGIALGFMSYCIMKVC). Residues 419 to 444 (TGRWRDLNLCVVVVAALFALKIILVD) lie on the Cytoplasmic side of the membrane.

The protein belongs to the nucleobase:cation symporter-2 (NCS2) (TC 2.A.40) family. Azg-like subfamily.

It is found in the cell inner membrane. Its function is as follows. High-affinity transporter for adenine. The sequence is that of Adenine permease AdeQ (adeQ) from Escherichia coli (strain K12).